Consider the following 292-residue polypeptide: Homoserine kinase (292 aa).

Residue 84 to 94 coordinates ATP; it reads PLARGMGSSSA.

The protein belongs to the GHMP kinase family. Homoserine kinase subfamily.

The protein resides in the cytoplasm. It catalyses the reaction L-homoserine + ATP = O-phospho-L-homoserine + ADP + H(+). It functions in the pathway amino-acid biosynthesis; L-threonine biosynthesis; L-threonine from L-aspartate: step 4/5. Catalyzes the ATP-dependent phosphorylation of L-homoserine to L-homoserine phosphate. This chain is Homoserine kinase, found in Thermus thermophilus (strain ATCC BAA-163 / DSM 7039 / HB27).